The following is a 335-amino-acid chain: Glyceraldehyde-3-phosphate dehydrogenase, cytosolic (335 aa).

Residues 13 to 14 (RI), D35, and R80 each bind NAD(+). Residues 151–153 (SCT), T182, 211–212 (TG), and R234 contribute to the D-glyceraldehyde 3-phosphate site. Residue C152 is the Nucleophile of the active site. An NAD(+)-binding site is contributed by N316.

Belongs to the glyceraldehyde-3-phosphate dehydrogenase family. In terms of assembly, homotetramer.

It is found in the cytoplasm. It catalyses the reaction D-glyceraldehyde 3-phosphate + phosphate + NAD(+) = (2R)-3-phospho-glyceroyl phosphate + NADH + H(+). Its pathway is carbohydrate degradation; glycolysis; pyruvate from D-glyceraldehyde 3-phosphate: step 1/5. In Gracilaria gracilis (Red alga), this protein is Glyceraldehyde-3-phosphate dehydrogenase, cytosolic (GAPC).